Here is a 344-residue protein sequence, read N- to C-terminus: Heat-inducible transcription repressor HrcA (344 aa).

The protein belongs to the HrcA family.

Negative regulator of class I heat shock genes (grpE-dnaK-dnaJ and groELS operons). Prevents heat-shock induction of these operons. This is Heat-inducible transcription repressor HrcA from Streptococcus sanguinis (strain SK36).